We begin with the raw amino-acid sequence, 1304 residues long: Histone-lysine N-methyltransferase met-2 (1304 aa).

A compositionally biased stretch (polar residues) spans 1–16 (MDQQEPSNNVDTSSIL). Residues 1 to 31 (MDQQEPSNNVDTSSILSDDGMETQEQSSFVT) form a disordered region. The stretch at 97 to 129 (NESEQEAVAAQRRVDAEKTAKDEAELKQQEEAE) forms a coiled coil. The region spanning 834 to 909 (FHRNSPIHTP…FSFDARIDTA (76 aa)) is the MBD domain. One can recognise a Pre-SET domain in the interval 971–1049 (SGCSCDGDCS…SCYNRVVQNN (79 aa)). Residues cysteine 973, cysteine 975, cysteine 979, cysteine 985, cysteine 987, cysteine 1030, cysteine 1034, cysteine 1036, and cysteine 1041 each coordinate Zn(2+). Residues 1052 to 1277 (YPMHIFKTAQ…AGDELTWDYQ (226 aa)) enclose the SET domain. Residues 1062–1064 (SGW), aspartate 1098, and tyrosine 1100 contribute to the S-adenosyl-L-methionine site. Over residues 1113–1122 (EKGREDHETD) the composition is skewed to basic and acidic residues. Positions 1113 to 1201 (EKGREDHETD…DSMEKDNIES (89 aa)) are disordered. Acidic residues predominate over residues 1128–1144 (DESDYDDEEGSDGDSGD). A compositionally biased stretch (basic and acidic residues) spans 1152–1165 (KRQDSSESGEETKR). Residues 1166–1178 (LTRQKRKQSKKSG) are compositionally biased toward basic residues. A compositionally biased stretch (basic and acidic residues) spans 1182–1201 (SVEKDDTTPRDSMEKDNIES). S-adenosyl-L-methionine contacts are provided by residues arginine 1231 and 1234–1235 (NH). Residues cysteine 1237, cysteine 1290, cysteine 1292, and cysteine 1297 each contribute to the Zn(2+) site. In terms of domain architecture, Post-SET spans 1286-1302 (TQLTCHCGAENCTGRLL).

The protein belongs to the class V-like SAM-binding methyltransferase superfamily.

The protein localises to the nucleus. It is found in the chromosome. The protein resides in the cytoplasm. The catalysed reaction is N(6)-methyl-L-lysyl(9)-[histone H3] + S-adenosyl-L-methionine = N(6),N(6)-dimethyl-L-lysyl(9)-[histone H3] + S-adenosyl-L-homocysteine + H(+). It catalyses the reaction L-lysyl(9)-[histone H3] + S-adenosyl-L-methionine = N(6)-methyl-L-lysyl(9)-[histone H3] + S-adenosyl-L-homocysteine + H(+). Histone methyltransferase which is required for the mono- and dimethylation of 'Lys-9' of histone H3. This increases the efficiency of set-25-mediated trimethylation of histone H3 'Lys-9'. Involved in the transcriptional repression of lin-3 which is required for the negative regulation of vulval cell fate specification during postembryonic development. Has a role in blocking checkpoint signaling and mediating the transcriptional silencing of meiotic sex chromosome inactivation; a mechanism which enables checkpoint proteins to distinguish between the partnerless male X chromosome and asynapsed chromosomes thereby shielding the lone X from inappropriate activation of an apoptotic program. Operates redundantly with set-25 to position chromatin at the nuclear periphery. Required for small-RNA-induced H3K9 methylation. Together with set-25, protects and stabilizes repeat-rich genomic regions by suppressing transcription-induced replication stress through methylation of H3K9. Together with spr-5, required for transgenerational fertility. This is Histone-lysine N-methyltransferase met-2 (met-2) from Caenorhabditis elegans.